The sequence spans 594 residues: MTTGSALYIPPYKADDQDVVVELNNRFGPDAFTAQATRTGMPVLWVARAKLVEVLTFLRNLPKPYVMLYDLHGVDERLRTKRQGLPSGADFTVFYHLLSIERNSDVMIKVALSESDLSVPTVTGIWPNASWYEREVWDMFGIDFPGHPHLTRIMMPPTWEGHPLRKDFPARATEFDPFSLNLAKQQLEEEAARFRPEDWGMKRSGTNEDYMFLNLGPNHPSAHGAFRIILQLDGEEIVDCVPDIGYHHRGAEKMAERQSWHSFIPYTDRIDYLGGVMNNLPYVLSVEKLAGIKVPDRVDTIRIMMAEFFRITSHLLFLGTYIQDVGAMTPVFFTFTDRQRAYKVIEAITGFRLHPAWYRIGGVAHDLPNGWERLVKEFIDWMPKRLDEYQKAALDNSILKGRTIGVAAYNTKEALEWGVTGAGLRSTGCDFDLRKARPYSGYENFEFEVPLAANGDAYDRCIVRVEEMRQSLKIIEQCMRNMPAGPYKADHPLTTPPPKERTLQHIETLITHFLQVSWGPVMPANESFQMIEATKGINSYYLTSDGGTMSYRTRIRTPSFPHLQQIPSVIKGEMVADLIAYLGSIDFVMADVDR.

Residues 1 to 185 (MTTGSALYIP…DPFSLNLAKQ (185 aa)) are NADH dehydrogenase I subunit C. An NADH dehydrogenase I subunit D region spans residues 209 to 594 (DYMFLNLGPN…IDFVMADVDR (386 aa)).

The protein in the N-terminal section; belongs to the complex I 30 kDa subunit family. It in the C-terminal section; belongs to the complex I 49 kDa subunit family. NDH-1 is composed of 13 different subunits. Subunits NuoB, CD, E, F, and G constitute the peripheral sector of the complex.

The protein localises to the cell inner membrane. It catalyses the reaction a quinone + NADH + 5 H(+)(in) = a quinol + NAD(+) + 4 H(+)(out). Functionally, NDH-1 shuttles electrons from NADH, via FMN and iron-sulfur (Fe-S) centers, to quinones in the respiratory chain. The immediate electron acceptor for the enzyme in this species is believed to be ubiquinone. Couples the redox reaction to proton translocation (for every two electrons transferred, four hydrogen ions are translocated across the cytoplasmic membrane), and thus conserves the redox energy in a proton gradient. The polypeptide is NADH-quinone oxidoreductase subunit C/D (Pseudomonas fluorescens (strain SBW25)).